The sequence spans 723 residues: Catalase-peroxidase (723 aa).

A cross-link (tryptophyl-tyrosyl-methioninium (Trp-Tyr) (with M-250)) is located at residues 96-224 (WHAAGSYRVA…LAAVMMGLIY (129 aa)). H97 serves as the catalytic Proton acceptor. Positions 224-250 (YVNPEGVDGQPDPLKTAQDVRVTFARM) form a cross-link, tryptophyl-tyrosyl-methioninium (Tyr-Met) (with W-96). H265 contributes to the heme b binding site.

Belongs to the peroxidase family. Peroxidase/catalase subfamily. As to quaternary structure, homodimer or homotetramer. Heme b is required as a cofactor. Post-translationally, formation of the three residue Trp-Tyr-Met cross-link is important for the catalase, but not the peroxidase activity of the enzyme.

The enzyme catalyses H2O2 + AH2 = A + 2 H2O. It carries out the reaction 2 H2O2 = O2 + 2 H2O. In terms of biological role, bifunctional enzyme with both catalase and broad-spectrum peroxidase activity. The protein is Catalase-peroxidase of Leptothrix cholodnii (strain ATCC 51168 / LMG 8142 / SP-6) (Leptothrix discophora (strain SP-6)).